A 280-amino-acid chain; its full sequence is Ribosomal RNA small subunit methyltransferase A (280 aa).

Residues His-13, Leu-15, Gly-40, Glu-61, Asp-85, and Asn-105 each coordinate S-adenosyl-L-methionine.

The protein belongs to the class I-like SAM-binding methyltransferase superfamily. rRNA adenine N(6)-methyltransferase family. RsmA subfamily.

Its subcellular location is the cytoplasm. It catalyses the reaction adenosine(1518)/adenosine(1519) in 16S rRNA + 4 S-adenosyl-L-methionine = N(6)-dimethyladenosine(1518)/N(6)-dimethyladenosine(1519) in 16S rRNA + 4 S-adenosyl-L-homocysteine + 4 H(+). Its function is as follows. Specifically dimethylates two adjacent adenosines (A1518 and A1519) in the loop of a conserved hairpin near the 3'-end of 16S rRNA in the 30S particle. May play a critical role in biogenesis of 30S subunits. The polypeptide is Ribosomal RNA small subunit methyltransferase A (Phocaeicola vulgatus (strain ATCC 8482 / DSM 1447 / JCM 5826 / CCUG 4940 / NBRC 14291 / NCTC 11154) (Bacteroides vulgatus)).